Consider the following 86-residue polypeptide: Anti-adapter protein IraP (86 aa).

A coiled-coil region spans residues 1 to 38; sequence MKNLIAELLVKLAQKEEEAKELTVQVEALEIVVTALLR.

This sequence belongs to the IraP family. In terms of assembly, interacts with RssB.

The protein localises to the cytoplasm. Its function is as follows. Inhibits RpoS proteolysis by regulating RssB activity, thereby increasing the stability of the sigma stress factor RpoS especially during phosphate starvation, but also in stationary phase and during nitrogen starvation. Its effect on RpoS stability is due to its interaction with RssB, which probably blocks the interaction of RssB with RpoS, and the consequent delivery of the RssB-RpoS complex to the ClpXP protein degradation pathway. This chain is Anti-adapter protein IraP, found in Klebsiella pneumoniae subsp. pneumoniae (strain ATCC 700721 / MGH 78578).